A 349-amino-acid polypeptide reads, in one-letter code: Protein RecA (349 aa).

64-71 (GPESSGKT) serves as a coordination point for ATP.

It belongs to the RecA family.

The protein localises to the cytoplasm. Can catalyze the hydrolysis of ATP in the presence of single-stranded DNA, the ATP-dependent uptake of single-stranded DNA by duplex DNA, and the ATP-dependent hybridization of homologous single-stranded DNAs. It interacts with LexA causing its activation and leading to its autocatalytic cleavage. This is Protein RecA from Rhodopseudomonas palustris (strain ATCC BAA-98 / CGA009).